The following is a 366-amino-acid chain: Ferrochelatase (366 aa).

H210 and E293 together coordinate Fe cation.

This sequence belongs to the ferrochelatase family.

It localises to the cytoplasm. The enzyme catalyses heme b + 2 H(+) = protoporphyrin IX + Fe(2+). It functions in the pathway porphyrin-containing compound metabolism; protoheme biosynthesis; protoheme from protoporphyrin-IX: step 1/1. Functionally, catalyzes the ferrous insertion into protoporphyrin IX. The protein is Ferrochelatase of Leptospira borgpetersenii serovar Hardjo-bovis (strain JB197).